The following is a 484-amino-acid chain: Dolichyl-P-Man:Man5GlcNAc2-PP-dolichol alpha-1,3-mannosyltransferase l(2)not2 (484 aa).

Over 1 to 43 the chain is Cytoplasmic; it reads MAPPKAASHRPAVRRKKSGTLVDSILDKYLNVRFFKYLLLEPA. The helical transmembrane segment at 44 to 64 threads the bilayer; that stretch reads ALPIVGLFVLLAELVINVVVI. Residues 65-97 are Lumenal-facing; sequence QRVPYTEIDWVAYMQECEGFLNGTTNYSLLRGD. The helical transmembrane segment at 98–118 threads the bilayer; that stretch reads TGPLVYPAAFVYIYSALYYVT. Residues 119 to 125 are Cytoplasmic-facing; that stretch reads SHGTNVR. The helical transmembrane segment at 126–146 threads the bilayer; it reads LAQYIFAGIYLLQLALVLRLY. At 147–171 the chain is on the lumenal side; sequence SKSRKVPPYVLVLSAFTSYRIHSIY. The chain crosses the membrane as a helical span at residues 172–192; it reads VLRLFNDPVAVLLLYAALNLF. Residues 193 to 211 are Cytoplasmic-facing; that stretch reads LDRRWTLGSTFFSLAVGVK. Residues 212 to 232 form a helical membrane-spanning segment; sequence MNILLFAPALLLFYLANLGLL. Position 233 (Arg-233) is a topological domain, lumenal. The chain crosses the membrane as a helical span at residues 234-254; the sequence is TILQLAVCGVIQLLLGAPFLL. The Cytoplasmic segment spans residues 255 to 294; the sequence is THPVEYLRGSFDLGRIFEHKWTVNYRFLSRDVFENRTFHV. The chain crosses the membrane as a helical span at residues 295-315; the sequence is SLLGLHLLLLLAFAKPTWTFF. Residues 316-403 lie on the Lumenal side of the membrane; sequence QSYVRLRRIE…YGIHFDRCTQ (88 aa). A helical transmembrane segment spans residues 404-424; it reads LALLPFFLCNLVGVACSRSLH. The Cytoplasmic segment spans residues 425 to 426; sequence YQ. Residues 427–447 form a helical membrane-spanning segment; that stretch reads FYVWYFHSLPYLAWSTPYSLG. The Lumenal segment spans residues 448–484; sequence VRCLILGLIEYCWNTYPSTNFSSAALHFTHIIPPYQL.

The protein belongs to the glycosyltransferase ALG3 family.

The protein localises to the endoplasmic reticulum membrane. The catalysed reaction is an alpha-D-Man-(1-&gt;2)-alpha-D-Man-(1-&gt;2)-alpha-D-Man-(1-&gt;3)-[alpha-D-Man-(1-&gt;6)]-beta-D-Man-(1-&gt;4)-beta-D-GlcNAc-(1-&gt;4)-alpha-D-GlcNAc-diphospho-di-trans,poly-cis-dolichol + a di-trans,poly-cis-dolichyl beta-D-mannosyl phosphate = an alpha-D-Man-(1-&gt;2)-alpha-D-Man-(1-&gt;2)-alpha-D-Man-(1-&gt;3)-[alpha-D-Man-(1-&gt;3)-alpha-D-Man-(1-&gt;6)]-beta-D-Man-(1-&gt;4)-beta-D-GlcNAc-(1-&gt;4)-alpha-D-GlcNAc-diphospho-di-trans,poly-cis-dolichol + a di-trans,poly-cis-dolichyl phosphate + H(+). It participates in protein modification; protein glycosylation. Its function is as follows. Probable alpha-1,3-mannosyltransferase involved in the N-glycosylation pathway. Involved in glycosylation of the TNF receptor grnd, regulating its ligand affinity. Required for normal epithelial growth and architecture. Suppressor of JNK-dependent intestinal stem cell proliferation. The sequence is that of Dolichyl-P-Man:Man5GlcNAc2-PP-dolichol alpha-1,3-mannosyltransferase l(2)not2 from Drosophila melanogaster (Fruit fly).